The sequence spans 364 residues: Transcription factor IIIA (364 aa).

9 C2H2-type zinc fingers span residues 38–62, 68–92, 98–123, 130–154, 160–184, 187–211, 215–237, 244–269, and 275–299; these read FICSFPDCSASYNKAWKLDAHLCKH, FVCDYEGCGKAFIRDYHLSRHVLIH, FVCADDGCNQKFNTKSNLKKHIERKH, YVCSYEGCKKAFKKHQQLRTHQCQH, FRCTHEGCGKHFASPSRLKRHGKVH, YLCQKGCSFMGKTWTELLKHMREAH, ITCNVCQRMFKRRDYLKQHMKTH, YRCPRQGCGRTYTTVFNLQSHILSFH, and FVCEHAGCGKTFAMKQSLMRHSVVH. Residues 299-364 are disordered; it reads HDPDKKRMKL…PPPAALLTVC (66 aa). Over residues 338 to 352 the composition is skewed to low complexity; the sequence is SLPNASAESSSSPEA.

The protein localises to the nucleus. Involved in ribosomal large subunit biogenesis. Binds the approximately 50 base pairs internal control region (ICR) of 5S ribosomal RNA genes. It is required for their RNA polymerase III-dependent transcription and may also maintain the transcription of other genes. Also binds the transcribed 5S RNA's. The polypeptide is Transcription factor IIIA (Gtf3a) (Mus musculus (Mouse)).